Here is a 1382-residue protein sequence, read N- to C-terminus: Hepatocyte growth factor receptor (1382 aa).

A signal peptide spans 1 to 24 (MKSPAVLAPGILVFLFTFVQKSDG). The Extracellular segment spans residues 25 to 933 (ECKEALVKSR…VIVQPDQNFT (909 aa)). Positions 27–516 (KEALVKSRMN…TGKKITKIPL (490 aa)) constitute a Sema domain. A glycan (N-linked (GlcNAc...) asparagine) is linked at Asn-45. Cystine bridges form between Cys-95–Cys-101, Cys-98–Cys-160, Cys-133–Cys-141, and Cys-173–Cys-176. A glycan (N-linked (GlcNAc...) asparagine) is linked at Asn-106. Asn-149 carries an N-linked (GlcNAc...) asparagine glycan. 2 N-linked (GlcNAc...) asparagine glycosylation sites follow: Asn-203 and Asn-359. Intrachain disulfides connect Cys-299–Cys-364 and Cys-386–Cys-398. N-linked (GlcNAc...) asparagine glycosylation is found at Asn-400 and Asn-406. Cystine bridges form between Cys-521–Cys-539, Cys-527–Cys-562, Cys-530–Cys-546, and Cys-542–Cys-552. IPT/TIG domains are found at residues 564 to 656 (PAIY…FSYV), 658 to 740 (PIIT…FIYR), and 743 to 837 (PIVY…LIYV). Thr-583 is a glycosylation site (O-linked (Man) threonine). Asn-608 and Asn-636 each carry an N-linked (GlcNAc...) asparagine glycan. Thr-677 and Thr-762 each carry an O-linked (Man) threonine glycan. Residues Asn-786, Asn-880, and Asn-931 are each glycosylated (N-linked (GlcNAc...) asparagine). A helical membrane pass occupies residues 934–956 (GLIVGVVSISIILLLLLGLFLWL). Over 957–1382 (KKRKQIKDLG…QDNVNGEGDT (426 aa)) the chain is Cytoplasmic. Position 967 is a phosphoserine (Ser-967). Position 978 is a phosphothreonine (Thr-978). 3 positions are modified to phosphoserine: Ser-991, Ser-998, and Ser-1001. Tyr-1004 carries the phosphotyrosine modification. The region spanning 1079–1346 (VHFNEVIGRG…RISAIFSTFI (268 aa)) is the Protein kinase domain. ATP contacts are provided by residues 1085 to 1093 (IGRGHFGCV) and Lys-1111. The Proton acceptor role is filled by Asp-1205. The segment at 1213 to 1382 (LDEKFTVKVA…QDNVNGEGDT (170 aa)) is interaction with RANBP9. Residue Tyr-1231 is modified to Phosphotyrosine. Phosphotyrosine; by autocatalysis is present on residues Tyr-1235 and Tyr-1236. Residue Thr-1290 is modified to Phosphothreonine. The interval 1321 to 1360 (WHPKAELRPSFSELVSRISAIFSTFIGEHYVHVNATYVNV) is interaction with MUC20. Tyr-1350 and Tyr-1357 each carry phosphotyrosine; by autocatalysis. Position 1366 is a phosphotyrosine (Tyr-1366).

It belongs to the protein kinase superfamily. Tyr protein kinase family. Heterodimer made of an alpha chain (50 kDa) and a beta chain (145 kDa) which are disulfide linked. Binds PLXNB1. Interacts when phosphorylated with downstream effectors including STAT3, PIK3R1, SRC, PCLG1, GRB2 and GAB1. Interacts with SPSB1, SPSB2 and SPSB4. Interacts with INPP5D/SHIP1. When phosphorylated at Tyr-1357, interacts with INPPL1/SHIP2. Interacts with RANBP9 and RANBP10, as well as SPSB1, SPSB2, SPSB3 and SPSB4. SPSB1 binding occurs in the presence and in the absence of HGF, however HGF treatment has a positive effect on this interaction. Interacts with MUC20; prevents interaction with GRB2 and suppresses hepatocyte growth factor-induced cell proliferation. Interacts with GRB10. Interacts with PTPN1 and PTPN2. Interacts with HSP90AA1 and HSP90AB1; the interaction suppresses MET kinase activity. Interacts with tensin TNS3. Interacts (when phosphorylated) with tensin TNS4 (via SH2 domain); the interaction increases MET protein stability by inhibiting MET endocytosis and subsequent lysosomal degradation. In terms of processing, autophosphorylated in response to ligand binding on Tyr-1235 and Tyr-1236 in the kinase domain leading to further phosphorylation of Tyr-1350 and Tyr-1357 in the C-terminal multifunctional docking site. Dephosphorylated by PTPRJ at Tyr-1350 and Tyr-1366. Dephosphorylated by PTPN1 and PTPN2. Post-translationally, ubiquitinated. Ubiquitination by CBL regulates the receptor stability and activity through proteasomal degradation. O-mannosylation of IPT/TIG domains by TMEM260 is required for protein maturation. O-mannosylated residues are composed of single mannose glycans that are not elongated or modified.

The protein localises to the membrane. The catalysed reaction is L-tyrosyl-[protein] + ATP = O-phospho-L-tyrosyl-[protein] + ADP + H(+). Its activity is regulated as follows. In its inactive state, the C-terminal tail interacts with the catalytic domain and inhibits the kinase activity. Upon ligand binding, the C-terminal tail is displaced and becomes phosphorylated, thus increasing the kinase activity. Receptor tyrosine kinase that transduces signals from the extracellular matrix into the cytoplasm by binding to hepatocyte growth factor/HGF ligand. Regulates many physiological processes including proliferation, scattering, morphogenesis and survival. Ligand binding at the cell surface induces autophosphorylation of MET on its intracellular domain that provides docking sites for downstream signaling molecules. Following activation by ligand, interacts with the PI3-kinase subunit PIK3R1, PLCG1, SRC, GRB2, STAT3 or the adapter GAB1. Recruitment of these downstream effectors by MET leads to the activation of several signaling cascades including the RAS-ERK, PI3 kinase-AKT, or PLCgamma-PKC. The RAS-ERK activation is associated with the morphogenetic effects while PI3K/AKT coordinates prosurvival effects. During embryonic development, MET signaling plays a role in gastrulation, development and migration of muscles and neuronal precursors, angiogenesis and kidney formation. In adults, participates in wound healing as well as organ regeneration and tissue remodeling. Also promotes differentiation and proliferation of hematopoietic cells. The sequence is that of Hepatocyte growth factor receptor (MET) from Muntiacus muntjak (Barking deer).